Consider the following 594-residue polypeptide: Alanine--tRNA ligase (594 aa).

The Zn(2+) site is built by H456, H460, C558, and H562.

It belongs to the class-II aminoacyl-tRNA synthetase family. Zn(2+) serves as cofactor.

It localises to the cytoplasm. It carries out the reaction tRNA(Ala) + L-alanine + ATP = L-alanyl-tRNA(Ala) + AMP + diphosphate. Catalyzes the attachment of alanine to tRNA(Ala) in a two-step reaction: alanine is first activated by ATP to form Ala-AMP and then transferred to the acceptor end of tRNA(Ala). Also edits incorrectly charged Ser-tRNA(Ala) and Gly-tRNA(Ala) via its editing domain. The polypeptide is Alanine--tRNA ligase (alaS) (Borrelia garinii subsp. bavariensis (strain ATCC BAA-2496 / DSM 23469 / PBi) (Borreliella bavariensis)).